Reading from the N-terminus, the 246-residue chain is Eukaryotic translation initiation factor 6 (246 aa).

Ser-174 and Ser-175 each carry phosphoserine; by CK1.

Belongs to the eIF-6 family. Monomer. Associates with the 60S ribosomal subunit. Post-translationally, phosphorylation at Ser-174 and Ser-175 promotes nuclear export.

Its subcellular location is the cytoplasm. The protein localises to the nucleus. The protein resides in the nucleolus. Functionally, binds to the 60S ribosomal subunit and prevents its association with the 40S ribosomal subunit to form the 80S initiation complex in the cytoplasm. Is also involved in ribosome biogenesis. Associates with pre-60S subunits in the nucleus and is involved in its nuclear export. The sequence is that of Eukaryotic translation initiation factor 6 from Verticillium alfalfae (strain VaMs.102 / ATCC MYA-4576 / FGSC 10136) (Verticillium wilt of alfalfa).